The sequence spans 3933 residues: Protein DOP1 homolog PFC0245c (3933 aa).

4 helical membrane-spanning segments follow: residues 70 to 90 (LNPL…SSIF), 98 to 118 (FINN…HCTI), 140 to 160 (IFAY…NNIL), and 163 to 183 (IYSI…WLLL). Disordered regions lie at residues 468–494 (RLNN…KYQG), 543–600 (ININ…NMLH), and 614–656 (KKIN…SSSS). Positions 470–486 (NNNNNNNNNNNNNNNNN) are enriched in low complexity. A compositionally biased stretch (acidic residues) spans 546–561 (NDDDNLNYDDNEDDEY). Composition is skewed to low complexity over residues 563–576 (NYHN…NYFN) and 585–597 (ENNN…NNNN). Positions 620–651 (GQTNNYDDDEEEEDEEEEDNNNNTSYNNNNNN) form a coiled coil. Residues 625–639 (YDDDEEEEDEEEEDN) are compositionally biased toward acidic residues. The span at 640 to 656 (NNNTSYNNNNNNSSSSS) shows a compositional bias: low complexity. The next 3 helical transmembrane spans lie at 782-802 (MLNL…YTFY), 842-862 (YLYI…MNFL), and 1186-1206 (FYFW…KSLL). Acidic residues predominate over residues 1216-1255 (DDTDDDDDDDDDDDDEEEDDDDEDDDDEDDEEEDDEEDLG). 2 disordered regions span residues 1216 to 1284 (DDTD…MNKK) and 1361 to 1405 (TNNN…NNFN). The segment covering 1263–1284 (SSKKGKKKKKKSVHKNKLMNKK) has biased composition (basic residues). A coiled-coil region spans residues 1349–1403 (ELNKMKYMNEDITNNNNNINNNSNNNNNNKNNINNNNNNNNNNNNNNNNLNNLNN). Residues 1362–1405 (NNNNNINNNSNNNNNNKNNINNNNNNNNNNNNNNNNLNNLNNFN) show a composition bias toward low complexity. 2 helical membrane passes run 1462–1482 (FIKL…MFCL) and 1997–2017 (KNIF…KLIY). Positions 2691-2739 (HRRKMNRQNIRTDSSNNNNNNNINSNNNNNNNNNNNNNNNNNNNNNIYN) are disordered. The span at 2704 to 2739 (SSNNNNNNNINSNNNNNNNNNNNNNNNNNNNNNIYN) shows a compositional bias: low complexity. The next 5 membrane-spanning stretches (helical) occupy residues 2860–2880 (INLN…CTLT), 2905–2925 (IMSS…HIYV), 3017–3037 (YSEI…YHTV), 3200–3220 (ILIL…YIII), and 3276–3296 (IIIN…SWIF). The disordered stretch occupies residues 3620–3646 (LKNEKSTRTYNSSLQEGSDYDEEEDEE). Residues 3637–3646 (SDYDEEEDEE) show a composition bias toward acidic residues. A coiled-coil region spans residues 3897–3925 (KEETIILLKELNSVENDINDLFLEVDLNE).

Belongs to the DOP1 family.

Its subcellular location is the membrane. In terms of biological role, may be involved in protein traffic between late Golgi and early endosomes. This is Protein DOP1 homolog PFC0245c from Plasmodium falciparum (isolate 3D7).